We begin with the raw amino-acid sequence, 178 residues long: Leukemia NUP98 fusion partner 1 (178 aa).

Disordered regions lie at residues Glu28 to Val55, Ser89 to Ile108, and Ile147 to Glu178. Residues Arg34 to Thr47 are compositionally biased toward basic residues. The span at Ile147–Ala167 shows a compositional bias: basic and acidic residues.

This is Leukemia NUP98 fusion partner 1 (LNP1) from Homo sapiens (Human).